The primary structure comprises 256 residues: MLTYPNINPIAFSFGPLKVHWYGLMYLIGFIGAWLLGYWRIKHYKLNWNNDQLSDLIFYSALGVILGGRVGYMLFYDFQEFIHHPWVLFKIWEGGMSFHGGLLGVVIAAWLFCRKYGKTFLEVGDFVAPLVPLGLAAGRLGNFINGELWGRATDVPWGMIYPHVDDQPRHPSQLYEFGLEGVALFILIWCYASKPRQQGRVSALFLMGYAICRLIAESFRQPDSQLGFVAFGWLTMGQVLSIPMLLIGIWLWWAKR.

Transmembrane regions (helical) follow at residues 19–39, 56–76, and 91–111; these read VHWY…LGYW, LIFY…MLFY, and IWEG…AAWL. Position 139 (arginine 139) interacts with a 1,2-diacyl-sn-glycero-3-phospho-(1'-sn-glycerol). The helical transmembrane segment at 231-251 threads the bilayer; sequence FGWLTMGQVLSIPMLLIGIWL.

It belongs to the Lgt family.

It localises to the cell inner membrane. It carries out the reaction L-cysteinyl-[prolipoprotein] + a 1,2-diacyl-sn-glycero-3-phospho-(1'-sn-glycerol) = an S-1,2-diacyl-sn-glyceryl-L-cysteinyl-[prolipoprotein] + sn-glycerol 1-phosphate + H(+). The protein operates within protein modification; lipoprotein biosynthesis (diacylglyceryl transfer). In terms of biological role, catalyzes the transfer of the diacylglyceryl group from phosphatidylglycerol to the sulfhydryl group of the N-terminal cysteine of a prolipoprotein, the first step in the formation of mature lipoproteins. The chain is Phosphatidylglycerol--prolipoprotein diacylglyceryl transferase from Legionella pneumophila (strain Corby).